Consider the following 257-residue polypeptide: Large ribosomal subunit protein uL2 (257 aa).

Positions Val207–Ala231 are disordered.

This sequence belongs to the universal ribosomal protein uL2 family. In terms of assembly, component of the large ribosomal subunit.

It is found in the cytoplasm. Functionally, component of the large ribosomal subunit. The ribosome is a large ribonucleoprotein complex responsible for the synthesis of proteins in the cell. The chain is Large ribosomal subunit protein uL2 (rpl8) from Xenopus tropicalis (Western clawed frog).